Here is an 877-residue protein sequence, read N- to C-terminus: Bifunctional uridylyltransferase/uridylyl-removing enzyme (877 aa).

The interval 1-335 (MDGPNSDRAH…HRDDAFSPTP (335 aa)) is uridylyltransferase. The segment at 336–695 (VNDHFQAVND…LRPESLRGSV (360 aa)) is uridylyl-removing. In terms of domain architecture, HD spans 454-576 (VDEHTLFVVR…VRNQNTLNHL (123 aa)). ACT domains are found at residues 696-778 (EVFI…AVSR) and 805-877 (ILEL…VGDQ).

It belongs to the GlnD family. The cofactor is Mg(2+).

The catalysed reaction is [protein-PII]-L-tyrosine + UTP = [protein-PII]-uridylyl-L-tyrosine + diphosphate. The enzyme catalyses [protein-PII]-uridylyl-L-tyrosine + H2O = [protein-PII]-L-tyrosine + UMP + H(+). With respect to regulation, uridylyltransferase (UTase) activity is inhibited by glutamine, while glutamine activates uridylyl-removing (UR) activity. Functionally, modifies, by uridylylation and deuridylylation, the PII regulatory proteins (GlnB and homologs), in response to the nitrogen status of the cell that GlnD senses through the glutamine level. Under low glutamine levels, catalyzes the conversion of the PII proteins and UTP to PII-UMP and PPi, while under higher glutamine levels, GlnD hydrolyzes PII-UMP to PII and UMP (deuridylylation). Thus, controls uridylylation state and activity of the PII proteins, and plays an important role in the regulation of nitrogen fixation and metabolism. The chain is Bifunctional uridylyltransferase/uridylyl-removing enzyme from Methylococcus capsulatus (strain ATCC 33009 / NCIMB 11132 / Bath).